A 959-amino-acid chain; its full sequence is UPF0182 protein MAE_41360 (959 aa).

A run of 9 helical transmembrane segments spans residues 13 to 33 (PILLFLGCLVIGQLGVLVVAN), 50 to 70 (LSWQLGLGWGSAILSLLFIFT), 99 to 119 (LLGLLIIATGIGAWIGSMLLY), 156 to 176 (DISSNLWQGLIIAFLVLGLLI), 184 to 204 (IISIVFTVMLSFIIAGQWANF), 239 to 259 (LWLTGVGIYTLFAVILTYLFS), 276 to 296 (LRHLYALWSGLMGLLVLHHII), 319 to 339 (VGQFIEIILGIIAGITSIWLG), and 362 to 382 (FFPYLVPVFLYLIVWISGTII).

It belongs to the UPF0182 family.

It localises to the cell membrane. In Microcystis aeruginosa (strain NIES-843 / IAM M-2473), this protein is UPF0182 protein MAE_41360.